The chain runs to 424 residues: Serine hydroxymethyltransferase 1 (424 aa).

(6S)-5,6,7,8-tetrahydrofolate is bound by residues leucine 125 and 129 to 131 (GHL). Lysine 234 bears the N6-(pyridoxal phosphate)lysine mark.

The protein belongs to the SHMT family. In terms of assembly, homodimer. Pyridoxal 5'-phosphate is required as a cofactor.

It localises to the cytoplasm. It carries out the reaction (6R)-5,10-methylene-5,6,7,8-tetrahydrofolate + glycine + H2O = (6S)-5,6,7,8-tetrahydrofolate + L-serine. It functions in the pathway one-carbon metabolism; tetrahydrofolate interconversion. It participates in amino-acid biosynthesis; glycine biosynthesis; glycine from L-serine: step 1/1. Functionally, catalyzes the reversible interconversion of serine and glycine with tetrahydrofolate (THF) serving as the one-carbon carrier. This reaction serves as the major source of one-carbon groups required for the biosynthesis of purines, thymidylate, methionine, and other important biomolecules. Also exhibits THF-independent aldolase activity toward beta-hydroxyamino acids, producing glycine and aldehydes, via a retro-aldol mechanism. This chain is Serine hydroxymethyltransferase 1, found in Burkholderia lata (strain ATCC 17760 / DSM 23089 / LMG 22485 / NCIMB 9086 / R18194 / 383).